The primary structure comprises 346 residues: Ribosomal RNA small subunit methyltransferase H (346 aa).

Residues 46–48 (GGY), Asp63, Phe90, Asp113, and Gln120 each bind S-adenosyl-L-methionine. Positions 270–346 (GGSAGSRHMP…LPETNELARS (77 aa)) are disordered.

It belongs to the methyltransferase superfamily. RsmH family.

It is found in the cytoplasm. The enzyme catalyses cytidine(1402) in 16S rRNA + S-adenosyl-L-methionine = N(4)-methylcytidine(1402) in 16S rRNA + S-adenosyl-L-homocysteine + H(+). Functionally, specifically methylates the N4 position of cytidine in position 1402 (C1402) of 16S rRNA. This chain is Ribosomal RNA small subunit methyltransferase H, found in Brucella suis (strain ATCC 23445 / NCTC 10510).